Reading from the N-terminus, the 204-residue chain is E2 ubiquitin-conjugating enzyme PEX4 (204 aa).

The UBC core domain maps to 2-196; it reads SAEKRLLQEY…IEYYVGRYSI (195 aa). Catalysis depends on Cys-133, which acts as the Glycyl thioester intermediate.

This sequence belongs to the ubiquitin-conjugating enzyme family.

It is found in the peroxisome membrane. The catalysed reaction is S-ubiquitinyl-[E1 ubiquitin-activating enzyme]-L-cysteine + [E2 ubiquitin-conjugating enzyme]-L-cysteine = [E1 ubiquitin-activating enzyme]-L-cysteine + S-ubiquitinyl-[E2 ubiquitin-conjugating enzyme]-L-cysteine.. The protein operates within protein modification; protein ubiquitination. Its function is as follows. E2 ubiquitin-conjugating enzyme involved in peroxisome biosynthesis. Acts late in peroxisomal matrix protein import, after matrix protein translocation. Required for both monoubiquitination and polyubiquitination of coreceptor PEX20. polyubiquitination of PEX20 at conserved lysine 'Lys-19' near the N-terminus leads to its and proteasomal degradation, whereas a monoubiquitination at the conserved cysteine 'Cys-8' is essential for its recycling. This is E2 ubiquitin-conjugating enzyme PEX4 from Komagataella phaffii (strain GS115 / ATCC 20864) (Yeast).